A 290-amino-acid polypeptide reads, in one-letter code: Small ribosomal subunit biogenesis GTPase RsgA (290 aa).

In terms of domain architecture, CP-type G spans 62–213 (KNSLVRPPIV…IADTPGFSSL (152 aa)). GTP-binding positions include 111 to 114 (SKMD) and 156 to 164 (GQTGVGKST). Positions 237, 242, 244, and 250 each coordinate Zn(2+).

Belongs to the TRAFAC class YlqF/YawG GTPase family. RsgA subfamily. Monomer. Associates with 30S ribosomal subunit, binds 16S rRNA. Zn(2+) serves as cofactor.

The protein resides in the cytoplasm. One of several proteins that assist in the late maturation steps of the functional core of the 30S ribosomal subunit. Helps release RbfA from mature subunits. May play a role in the assembly of ribosomal proteins into the subunit. Circularly permuted GTPase that catalyzes slow GTP hydrolysis, GTPase activity is stimulated by the 30S ribosomal subunit. In Streptococcus pyogenes serotype M3 (strain ATCC BAA-595 / MGAS315), this protein is Small ribosomal subunit biogenesis GTPase RsgA.